Reading from the N-terminus, the 281-residue chain is 4-diphosphocytidyl-2-C-methyl-D-erythritol kinase (281 aa).

Residue Lys15 is part of the active site. 98–108 (PTGAGLGGGSS) provides a ligand contact to ATP. Asp140 is an active-site residue.

The protein belongs to the GHMP kinase family. IspE subfamily.

The enzyme catalyses 4-CDP-2-C-methyl-D-erythritol + ATP = 4-CDP-2-C-methyl-D-erythritol 2-phosphate + ADP + H(+). The protein operates within isoprenoid biosynthesis; isopentenyl diphosphate biosynthesis via DXP pathway; isopentenyl diphosphate from 1-deoxy-D-xylulose 5-phosphate: step 3/6. In terms of biological role, catalyzes the phosphorylation of the position 2 hydroxy group of 4-diphosphocytidyl-2C-methyl-D-erythritol. The chain is 4-diphosphocytidyl-2-C-methyl-D-erythritol kinase from Neisseria gonorrhoeae (strain NCCP11945).